The chain runs to 78 residues: Probable [Fe-S]-dependent transcriptional repressor (78 aa).

Residues Cys56, Cys61, Cys64, and Cys70 each contribute to the iron-sulfur cluster site.

Belongs to the FeoC family.

Functionally, may function as a transcriptional regulator that controls feoABC expression. This is Probable [Fe-S]-dependent transcriptional repressor from Escherichia fergusonii (strain ATCC 35469 / DSM 13698 / CCUG 18766 / IAM 14443 / JCM 21226 / LMG 7866 / NBRC 102419 / NCTC 12128 / CDC 0568-73).